Here is a 516-residue protein sequence, read N- to C-terminus: Anaerobic nitric oxide reductase transcription regulator NorR (516 aa).

Residue D57 is modified to 4-aspartylphosphate. The 230-residue stretch at 187-416 folds into the Sigma-54 factor interaction domain; sequence IIGLSAPMLQ…LEHAIHRAVV (230 aa). ATP is bound by residues 215-222 and 278-287; these read GETGTGKE and ADNGTLFLDE. The H-T-H motif DNA-binding region spans 482 to 501; the sequence is WAATARALELDVANLHRLAK.

Its pathway is nitrogen metabolism; nitric oxide reduction. Functionally, required for the expression of anaerobic nitric oxide (NO) reductase, acts as a transcriptional activator for at least the norVW operon. Activation also requires sigma-54. The sequence is that of Anaerobic nitric oxide reductase transcription regulator NorR from Klebsiella pneumoniae (strain 342).